Reading from the N-terminus, the 199-residue chain is Urease accessory protein UreG (199 aa).

8 to 15 (GPVGSGKT) is a GTP binding site.

The protein belongs to the SIMIBI class G3E GTPase family. UreG subfamily. In terms of assembly, homodimer. UreH, UreF and UreG form a complex that acts as a GTP-hydrolysis-dependent molecular chaperone, activating the urease apoprotein by helping to assemble the nickel containing metallocenter of UreC. The UreE protein probably delivers the nickel.

The protein resides in the cytoplasm. Facilitates the functional incorporation of the urease nickel metallocenter. This process requires GTP hydrolysis, probably effectuated by UreG. The protein is Urease accessory protein UreG of Helicobacter acinonychis (strain Sheeba).